The chain runs to 66 residues: Type 3 secretion system chaperone YscE (66 aa).

Belongs to the YscE family. In terms of assembly, component of the heterodimeric YscE-YscG chaperone. The YscE-YscG chaperone forms a stable ternary complex with YscF/SctF. YscE interacts with YscG, but makes very little direct contact with YscF. Homodimer in solution.

It localises to the cytoplasm. Chaperone of the type III secretion system (T3SS), also called injectisome, which is used to inject bacterial effector proteins into eukaryotic host cells. Along with YscG, prevents premature polymerization of the YscF/SctF needle protein within the cytoplasm. Is also required for stable expression of cytosolic YscF and for YscF secretion. Likely plays a role in targeting YscF present in the cytosolic YscEFG complex to the T3SS apparatus. Required for Yop secretion. This is Type 3 secretion system chaperone YscE from Yersinia pestis.